Reading from the N-terminus, the 295-residue chain is Protease HtpX homolog (295 aa).

Transmembrane regions (helical) follow at residues I6–V26 and L40–L60. Zn(2+) is bound at residue H148. E149 is a catalytic residue. H152 is a Zn(2+) binding site. Helical transmembrane passes span L163–L183 and I198–F218. E223 lines the Zn(2+) pocket.

It belongs to the peptidase M48B family. Requires Zn(2+) as cofactor.

Its subcellular location is the cell inner membrane. This chain is Protease HtpX homolog, found in Leptospira borgpetersenii serovar Hardjo-bovis (strain JB197).